A 586-amino-acid polypeptide reads, in one-letter code: Tetratricopeptide repeat protein 39B (586 aa).

TPR repeat units lie at residues 292 to 325, 483 to 516, and 524 to 557; these read SIIL…QQEW, CLVQ…EKRV, and PFTF…YKDY.

The protein belongs to the TTC39 family.

In terms of biological role, may be involved in lipid metabolism. In Xenopus laevis (African clawed frog), this protein is Tetratricopeptide repeat protein 39B (ttc39b).